The chain runs to 223 residues: Endonuclease NucS (223 aa).

It belongs to the NucS endonuclease family.

It localises to the cytoplasm. Functionally, cleaves both 3' and 5' ssDNA extremities of branched DNA structures. This chain is Endonuclease NucS, found in Mycolicibacterium gilvum (strain PYR-GCK) (Mycobacterium gilvum (strain PYR-GCK)).